The sequence spans 724 residues: Probable ATP-dependent RNA helicase DDX4 (724 aa).

Positions Met1–Ile11 are enriched in acidic residues. Disordered regions lie at residues Met1–Glu25 and Ser37–Arg241. The segment covering Ser108 to Arg130 has biased composition (basic and acidic residues). A compositionally biased stretch (polar residues) spans Glu168–Thr182. The Q motif signature appears at Leu286–Lys314. Residues Ile317–Phe500 form the Helicase ATP-binding domain. Ala330–Thr337 serves as a coordination point for ATP. The DEAD box motif lies at Asp444–Asp447. The Helicase C-terminal domain occupies Asp512–Ala675. The segment covering Ala683–Ala692 has biased composition (polar residues). The interval Ala683–Gly724 is disordered. A compositionally biased stretch (basic and acidic residues) spans Ser693–Gly704. Polar residues predominate over residues Asp705 to Ala715.

Belongs to the DEAD box helicase family. DDX4/VASA subfamily.

The protein localises to the cytoplasm. The catalysed reaction is ATP + H2O = ADP + phosphate + H(+). Its function is as follows. Probable ATP-dependent RNA helicase required during spermatogenesis to repress transposable elements and preventing their mobilization, which is essential for the germline integrity. Acts via the piRNA metabolic process, which mediates the repression of transposable elements during meiosis by forming complexes composed of piRNAs and Piwi proteins and governs the methylation and subsequent repression of transposons. Involved in the secondary piRNAs metabolic process, the production of piRNAs in fetal male germ cells through a ping-pong amplification cycle. The sequence is that of Probable ATP-dependent RNA helicase DDX4 from Pelophylax lessonae (Pool frog).